Consider the following 196-residue polypeptide: Pyridoxal 5'-phosphate synthase subunit PdxT (196 aa).

Residue 46–48 (GES) participates in L-glutamine binding. Cys78 acts as the Nucleophile in catalysis. Residues Arg105 and 133–134 (IR) each bind L-glutamine. Catalysis depends on charge relay system residues His169 and Glu171.

It belongs to the glutaminase PdxT/SNO family. In terms of assembly, in the presence of PdxS, forms a dodecamer of heterodimers. Only shows activity in the heterodimer.

It carries out the reaction aldehydo-D-ribose 5-phosphate + D-glyceraldehyde 3-phosphate + L-glutamine = pyridoxal 5'-phosphate + L-glutamate + phosphate + 3 H2O + H(+). The catalysed reaction is L-glutamine + H2O = L-glutamate + NH4(+). It participates in cofactor biosynthesis; pyridoxal 5'-phosphate biosynthesis. In terms of biological role, catalyzes the hydrolysis of glutamine to glutamate and ammonia as part of the biosynthesis of pyridoxal 5'-phosphate. The resulting ammonia molecule is channeled to the active site of PdxS. The sequence is that of Pyridoxal 5'-phosphate synthase subunit PdxT from Geobacillus stearothermophilus (Bacillus stearothermophilus).